Consider the following 853-residue polypeptide: E3 ubiquitin-protein ligase ZNRF3 (853 aa).

The signal sequence occupies residues 1–28; that stretch reads MKEPRIRGGLPLVWLWVLLAVAPGESLA. At 29–192 the chain is on the extracellular side; that stretch reads KETAFVEVVL…PRQPTEYFDM (164 aa). Residues 193–213 form a helical membrane-spanning segment; sequence GIFLAFFVVVSLVCLILLIKI. Topologically, residues 214–853 are cytoplasmic; sequence KLKQRRSQNS…GQDCHPTDRD (640 aa). An RING-type; atypical zinc finger spans residues 266 to 307; that stretch reads CAICLEKYIDGEELRVIPCTHRFHKRCVDPWLLQNHTCPHCR. 4 disordered regions span residues 583–629, 650–673, 685–713, and 834–853; these read SRSP…RLSS, SSGT…RGPE, GDPS…GGLY, and TGKE…TDRD. Gly residues predominate over residues 589 to 607; that stretch reads TGGGDAPGCGGEGGTGSGR. Residues 615–629 show a composition bias toward polar residues; that stretch reads HQTFPNSPSRDRLSS.

Belongs to the ZNRF3 family.

It is found in the cell membrane. The enzyme catalyses S-ubiquitinyl-[E2 ubiquitin-conjugating enzyme]-L-cysteine + [acceptor protein]-L-lysine = [E2 ubiquitin-conjugating enzyme]-L-cysteine + N(6)-ubiquitinyl-[acceptor protein]-L-lysine.. Its pathway is protein modification; protein ubiquitination. Functionally, E3 ubiquitin-protein ligase that acts as a negative regulator of the Wnt signaling pathway by mediating the ubiquitination and subsequent degradation of Wnt receptor complex components. Along with RSPO2 and RNF43, constitutes a master switch that governs limb specification. The protein is E3 ubiquitin-protein ligase ZNRF3 (znrf3) of Xenopus tropicalis (Western clawed frog).